The sequence spans 73 residues: Large ribosomal subunit protein bL31 (73 aa).

Zn(2+)-binding residues include C16, C18, C37, and C40.

It belongs to the bacterial ribosomal protein bL31 family. Type A subfamily. As to quaternary structure, part of the 50S ribosomal subunit. Zn(2+) serves as cofactor.

Binds the 23S rRNA. The chain is Large ribosomal subunit protein bL31 from Hamiltonella defensa subsp. Acyrthosiphon pisum (strain 5AT).